The sequence spans 306 residues: Aquaporin-1 (306 aa).

Polar residues predominate over residues 1-23 (MASTHSSLTTVQNNANNKSNRTL). A disordered region spans residues 1–24 (MASTHSSLTTVQNNANNKSNRTLN). Over 1–59 (MASTHSSLTTVQNNANNKSNRTLNTERRLSMESSVFTLYNKAADELDTSQRSAFQACHR) the chain is Cytoplasmic. The chain crosses the membrane as a helical span at residues 60–80 (EFLAEFIGTVILVLLTCGFCA). Over 81-92 (EQTLHIEESKSW) the chain is Extracellular. A helical membrane pass occupies residues 93 to 113 (LTSSFGSGLSVLIGICVSGHV). The Cytoplasmic portion of the chain corresponds to 114–145 (SGAHLNPAVTIAFCIFSGFPIRKVPSYITAQL). The NPA 1 signature appears at 119–121 (NPA). A helical transmembrane segment spans residues 146 to 166 (LGAFAGAALLYIIIEPAIVQF). Topologically, residues 167 to 192 (DGGQRYILGEKSTAGIFGTYPPLYVG) are extracellular. A helical transmembrane segment spans residues 193 to 213 (IGSAIASEIMGTAMLLLVIMV). At 214-226 (TGHPNNLPYKSAQ) the chain is on the cytoplasmic side. Residues 227-247 (GAMIALGITTISLCIGYTSGF) traverse the membrane as a helical segment. Topologically, residues 248–278 (SLNPARDFGPRLFTAIAGWGFDVFKVYHYYA) are extracellular. The NPA 2 signature appears at 250 to 252 (NPA). The helical transmembrane segment at 279 to 299 (LVPMFAPILGGLVGLMLMMPF) threads the bilayer. The Cytoplasmic segment spans residues 300-306 (SFLSVRA).

Belongs to the MIP/aquaporin (TC 1.A.8) family.

The protein resides in the cell membrane. The enzyme catalyses H2O(in) = H2O(out). Water channel required to facilitate the transport of water across membranes. Contributes to water uptake of spores during the early stages of spore germination. Aquaporins AQP1 and AQP2 act as extracellular pH sensors and enable the spores to hydrate under favorable conditions and to commence germination. Wounded vegetables and fruit present acidic pH, so the optimal pH range for germination is adapted to the relevant host pH. This is Aquaporin-1 from Rhizopus delemar (strain RA 99-880 / ATCC MYA-4621 / FGSC 9543 / NRRL 43880) (Mucormycosis agent).